The primary structure comprises 695 residues: D-(-)-3-hydroxybutyrate oligomer hydrolase (695 aa).

The signal sequence occupies residues 1–17 (MTTHGWGTRILLGAALA). Residue Ser308 is the Charge relay system of the active site.

It belongs to the D-(-)-3-hydroxybutyrate oligomer hydrolase family.

Its subcellular location is the secreted. The catalysed reaction is (3R)-hydroxybutanoate dimer + H2O = 2 (R)-3-hydroxybutanoate + H(+). Its pathway is lipid metabolism; butanoate metabolism. Functionally, participates in the degradation of poly-3-hydroxybutyrate (PHB). It works downstream of poly(3-hydroxybutyrate) depolymerase, hydrolyzing D(-)-3-hydroxybutyrate oligomers of various length (3HB-oligomers) into 3HB-monomers. This chain is D-(-)-3-hydroxybutyrate oligomer hydrolase, found in Burkholderia ambifaria (strain ATCC BAA-244 / DSM 16087 / CCUG 44356 / LMG 19182 / AMMD) (Burkholderia cepacia (strain AMMD)).